The following is a 175-amino-acid chain: Dual-action ribosomal maturation protein DarP (175 aa).

This sequence belongs to the DarP family.

It is found in the cytoplasm. Its function is as follows. Member of a network of 50S ribosomal subunit biogenesis factors which assembles along the 30S-50S interface, preventing incorrect 23S rRNA structures from forming. Promotes peptidyl transferase center (PTC) maturation. In Vibrio parahaemolyticus serotype O3:K6 (strain RIMD 2210633), this protein is Dual-action ribosomal maturation protein DarP.